The primary structure comprises 648 residues: Beta-glucuronidase (648 aa).

A signal peptide spans 1–22 (MSPRRSVCWFVLGQLLCSCAVA). 2 N-linked (GlcNAc...) asparagine glycosylation sites follow: Asn-172 and Asn-416. Glu-447 (proton donor) is an active-site residue. An N-linked (GlcNAc...) asparagine glycan is attached at Asn-627.

The protein belongs to the glycosyl hydrolase 2 family. Homotetramer. In terms of processing, undergoes a post-transcriptional proteolytic cleavage near its C-terminal end, which reduces its size by approximately 3 kDa. The site of this cleavage has as yet not been determined.

The protein resides in the lysosome. It catalyses the reaction a beta-D-glucuronoside + H2O = D-glucuronate + an alcohol. Inhibited by L-aspartic acid. Functionally, plays an important role in the degradation of dermatan and keratan sulfates. The sequence is that of Beta-glucuronidase (Gusb) from Rattus norvegicus (Rat).